A 396-amino-acid chain; its full sequence is 1-deoxy-D-xylulose 5-phosphate reductoisomerase (396 aa).

NADPH-binding residues include Thr-14, Gly-15, Ser-16, Ile-17, Gly-40, and Asn-128. Residue Lys-129 coordinates 1-deoxy-D-xylulose 5-phosphate. Glu-130 provides a ligand contact to NADPH. Residue Asp-154 coordinates Mn(2+). Positions 155, 156, 180, and 203 each coordinate 1-deoxy-D-xylulose 5-phosphate. Glu-156 provides a ligand contact to Mn(2+). Gly-209 serves as a coordination point for NADPH. Positions 216, 221, 222, and 225 each coordinate 1-deoxy-D-xylulose 5-phosphate. Glu-225 provides a ligand contact to Mn(2+).

The protein belongs to the DXR family. Mg(2+) serves as cofactor. Mn(2+) is required as a cofactor.

It carries out the reaction 2-C-methyl-D-erythritol 4-phosphate + NADP(+) = 1-deoxy-D-xylulose 5-phosphate + NADPH + H(+). It functions in the pathway isoprenoid biosynthesis; isopentenyl diphosphate biosynthesis via DXP pathway; isopentenyl diphosphate from 1-deoxy-D-xylulose 5-phosphate: step 1/6. In terms of biological role, catalyzes the NADPH-dependent rearrangement and reduction of 1-deoxy-D-xylulose-5-phosphate (DXP) to 2-C-methyl-D-erythritol 4-phosphate (MEP). This Xylella fastidiosa (strain 9a5c) protein is 1-deoxy-D-xylulose 5-phosphate reductoisomerase.